The primary structure comprises 391 residues: Phosphoglycerate kinase (391 aa).

Substrate-binding positions include 21-23, R36, 59-62, R113, and R146; these read DLN and HLGR. Residues K197, E319, and 345 to 348 contribute to the ATP site; that span reads GGDT.

It belongs to the phosphoglycerate kinase family. Monomer.

The protein localises to the cytoplasm. The enzyme catalyses (2R)-3-phosphoglycerate + ATP = (2R)-3-phospho-glyceroyl phosphate + ADP. It functions in the pathway carbohydrate degradation; glycolysis; pyruvate from D-glyceraldehyde 3-phosphate: step 2/5. The chain is Phosphoglycerate kinase from Shewanella sediminis (strain HAW-EB3).